A 119-amino-acid chain; its full sequence is MNTLDALDAQSLRSDIPAFRPGDTLKVHVRVIEGSRERNQVFQGVVIRRQGGGVRETFTVRKVSFGVGVERTFPVHSPNIAKVEVATRGDVRRAKLYYLRELRGKAAKIKEKRETAPAS.

The protein belongs to the bacterial ribosomal protein bL19 family.

In terms of biological role, this protein is located at the 30S-50S ribosomal subunit interface and may play a role in the structure and function of the aminoacyl-tRNA binding site. In Saccharopolyspora erythraea (strain ATCC 11635 / DSM 40517 / JCM 4748 / NBRC 13426 / NCIMB 8594 / NRRL 2338), this protein is Large ribosomal subunit protein bL19.